The primary structure comprises 518 residues: Cytochrome P450 CYP72A219 (518 aa).

The helical transmembrane segment at 2 to 22 (ELVLKLISSFCAIVVVILLGW) threads the bilayer. Heme is bound at residue Cys-465.

This sequence belongs to the cytochrome P450 family. Heme serves as cofactor.

Its subcellular location is the membrane. Probable heme-thiolate monooxygenase. This Panax ginseng (Korean ginseng) protein is Cytochrome P450 CYP72A219.